Consider the following 185-residue polypeptide: Ribosome maturation factor RimP (185 aa).

Positions 162 to 185 are disordered; it reads VRLERAADGAPERGGDRGDTEESR.

Belongs to the RimP family.

It localises to the cytoplasm. Its function is as follows. Required for maturation of 30S ribosomal subunits. The chain is Ribosome maturation factor RimP from Saccharopolyspora erythraea (strain ATCC 11635 / DSM 40517 / JCM 4748 / NBRC 13426 / NCIMB 8594 / NRRL 2338).